A 259-amino-acid polypeptide reads, in one-letter code: MAHAIPRPAEEIPLVPGRARSVRLGSTLPRVMDCAYGSPMAVDGDVRTGGDCGGGEGLYPTSTDTAAHAVSLPRSVGEFASAVRAMSADAADALRRGAGPPPEIWPRAYRMFCELFGRYAVSPMPVFHSADPLRRAVGRYLVDLGAAPVETHAELSTRLLFCAHWCCLGHAFGCSRQAMYERECARFFEARLGIGETPPADSERYWVALLDMAGADPELFPRHAAAAAYLRTRGRKLPLPLPPQAGSATVSVASQSINF.

A zinc finger lies at 162-174; that stretch reads CAHWCCLGHAFGC.

Belongs to the herpesviridae US10 family. Phosphorylated.

It is found in the virion tegument. It localises to the host nucleus matrix. The polypeptide is Virion protein US10 homolog (Equine herpesvirus 4 (strain 1942) (EHV-4)).